We begin with the raw amino-acid sequence, 433 residues long: ATP-sensitive inward rectifier potassium channel 12 (433 aa).

At 1–77 (MTAASRANPY…LADMFTTCVD (77 aa)) the chain is on the cytoplasmic side. Cysteine 75 bears the S-nitrosocysteine mark. Residues 78 to 104 (IRWRYMLLIFSLAFLASWLLFGIIFWV) form a helical membrane-spanning segment. 2 residues coordinate a 1,2-diacyl-sn-glycero-3-phospho-(1D-myo-inositol-4,5-bisphosphate): arginine 79 and arginine 81. At 105 to 129 (IAVAHGDLEPAEGRGRTPCVMQVHG) the chain is on the extracellular side. Cysteine 123 and cysteine 155 are oxidised to a cystine. The segment at residues 130–146 (FMAAFLFSIETQTTIGY) is an intramembrane region (helical; Pore-forming). Residues threonine 143, isoleucine 144, glycine 145, and tyrosine 146 each contribute to the K(+) site. The Selectivity filter motif lies at 143-148 (TIGYGL). Topologically, residues 147–155 (GLRCVTEEC) are extracellular. Residues 156–183 (PVAVFMVVAQSIVGCIIDSFMIGAIMAK) form a helical membrane-spanning segment. Lysine 183 and lysine 188 together coordinate a 1,2-diacyl-sn-glycero-3-phospho-(1D-myo-inositol-4,5-bisphosphate). Residues 184 to 433 (MARPKKRAQT…QRPYRRESEI (250 aa)) lie on the Cytoplasmic side of the membrane. Residues 387-433 (DEEDEADGDQDGRSRDGLSPQARHDFDRLQAGGGVLEQRPYRRESEI) are disordered. Over residues 396–414 (QDGRSRDGLSPQARHDFDR) the composition is skewed to basic and acidic residues. The PDZ-binding motif lies at 431 to 433 (SEI).

This sequence belongs to the inward rectifier-type potassium channel (TC 1.A.2.1) family. KCNJ12 subfamily. As to quaternary structure, homotetramer. Forms heteromer with KCNJ4. Can form heteromeric channels with Kir2.6/KCNJ18. Association, via its PDZ-recognition domain, with LIN7A, LIN7B, LIN7C, DLG1, CASK and APBA1 plays a key role in its localization and trafficking.

The protein resides in the membrane. Its subcellular location is the cell membrane. It is found in the sarcolemma. It localises to the T-tubule. It carries out the reaction K(+)(in) = K(+)(out). Activated by phosphatidylinositol 4,5-biphosphate (PtdIns(4,5)P2). PtdIns(4,5)P2 binding to the cytoplasmic side of the channel triggers a conformation change leading to channel opening. Inhibited by Ba(2+). In terms of biological role, inward rectifying potassium channel that probably participates in controlling the resting membrane potential in electrically excitable cells. Probably participates in establishing action potential waveform and excitability of neuronal and muscle tissues. Inward rectifier potassium channels are characterized by a greater tendency to allow potassium to flow into the cell rather than out of it. Their voltage dependence is regulated by the concentration of extracellular potassium; as external potassium is raised, the voltage range of the channel opening shifts to more positive voltages. The inward rectification is mainly due to the blockage of outward current by internal magnesium. The chain is ATP-sensitive inward rectifier potassium channel 12 (KCNJ12) from Homo sapiens (Human).